A 217-amino-acid chain; its full sequence is Ras-related protein RABA2c (217 aa).

GTP contacts are provided by residues 19–27 (GDSGVGKSN), 38–44 (CLESKST), 67–71 (DTAGQ), 125–128 (NKSD), and 155–157 (SAL). Residues 41–49 (SKSTIGVEF) carry the Effector region motif. The disordered stretch occupies residues 195 to 217 (PGQGTTINVDDTSGGAKRACCSS). Residues Cys214 and Cys215 are each lipidated (S-geranylgeranyl cysteine).

Belongs to the small GTPase superfamily. Rab family. As to expression, expressed in root tips.

The protein localises to the endosome membrane. It is found in the golgi apparatus. Its subcellular location is the trans-Golgi network membrane. In terms of biological role, intracellular vesicle trafficking and protein transport. This is Ras-related protein RABA2c (RABA2C) from Arabidopsis thaliana (Mouse-ear cress).